The sequence spans 222 residues: Superoxide dismutase [Mn], mitochondrial (222 aa).

The N-terminal 24 residues, 1 to 24 (MLCRAACSAGRRLGPAASTAGSRH), are a transit peptide targeting the mitochondrion. Residue His50 participates in Mn(2+) binding. 3'-nitrotyrosine is present on Tyr58. An N6-acetyllysine; alternate mark is found at Lys68 and Lys75. An N6-succinyllysine; alternate mark is found at Lys68 and Lys75. Mn(2+) is bound at residue His98. Residue Lys114 is modified to N6-acetyllysine. 2 positions are modified to N6-acetyllysine; alternate: Lys122 and Lys130. N6-succinyllysine; alternate is present on residues Lys122 and Lys130. Mn(2+) is bound by residues Asp183 and His187. Position 202 is an N6-acetyllysine (Lys202).

This sequence belongs to the iron/manganese superoxide dismutase family. As to quaternary structure, homotetramer. Mn(2+) is required as a cofactor. Nitrated under oxidative stress. Nitration coupled with oxidation inhibits the catalytic activity. In terms of processing, acetylation at Lys-122 decreases enzymatic activity. Deacetylated by SIRT3 upon exposure to ionizing radiations or after long fasting. Post-translationally, polyubiquitinated; leading to proteasomal degradation. Deubiquitinated by USP36 which increases protein stability.

The protein resides in the mitochondrion matrix. The enzyme catalyses 2 superoxide + 2 H(+) = H2O2 + O2. Destroys superoxide anion radicals which are normally produced within the cells and which are toxic to biological systems. The chain is Superoxide dismutase [Mn], mitochondrial (Sod2) from Rattus norvegicus (Rat).